We begin with the raw amino-acid sequence, 647 residues long: Threonine--tRNA ligase (647 aa).

In terms of domain architecture, TGS spans 1–63; the sequence is MADISIKFPD…ASDGSIEIVT (63 aa). A catalytic region spans residues 242–540; sequence DHRVIGNQLD…LTEIYKGAFP (299 aa). Positions 336, 387, and 517 each coordinate Zn(2+).

The protein belongs to the class-II aminoacyl-tRNA synthetase family. As to quaternary structure, homodimer. Zn(2+) is required as a cofactor.

It is found in the cytoplasm. The catalysed reaction is tRNA(Thr) + L-threonine + ATP = L-threonyl-tRNA(Thr) + AMP + diphosphate + H(+). In terms of biological role, catalyzes the attachment of threonine to tRNA(Thr) in a two-step reaction: L-threonine is first activated by ATP to form Thr-AMP and then transferred to the acceptor end of tRNA(Thr). Also edits incorrectly charged L-seryl-tRNA(Thr). The chain is Threonine--tRNA ligase from Levilactobacillus brevis (strain ATCC 367 / BCRC 12310 / CIP 105137 / JCM 1170 / LMG 11437 / NCIMB 947 / NCTC 947) (Lactobacillus brevis).